The sequence spans 498 residues: Angiopoietin-4 (498 aa).

Residues 1–22 (MPSPPAMLLGGLLLIVASTTVA) form the signal peptide. The disordered stretch occupies residues 51 to 80 (EPEPCPPEPEAFGGSNSLQRDSPAATLNLG). Residues 85–109 (QRMRQLEKMLENNTQWLQKLERYIQ) are a coiled coil. Residues N96, N126, N158, N247, N295, N306, N332, and N424 are each glycosylated (N-linked (GlcNAc...) asparagine). The stretch at 186 to 254 (HELHRLQGHN…SSNSSLLQRQ (69 aa)) forms a coiled coil. The 221-residue stretch at 277 to 497 (RAADQLFQDC…TTRMMVRPSG (221 aa)) folds into the Fibrinogen C-terminal domain. C286 and C315 form a disulfide bridge. The cysteines at positions 439 and 452 are disulfide-linked.

Homodimer; disulfide-linked. Interacts with TEK/TIE2.

It localises to the secreted. Its function is as follows. Binds to TEK/TIE2, modulating ANGPT1 signaling. Can induce tyrosine phosphorylation of TEK/TIE2. Promotes endothelial cell survival, migration and angiogenesis. The chain is Angiopoietin-4 (ANGPT4) from Bos taurus (Bovine).